The sequence spans 169 residues: Ribosome maturation factor RimM (169 aa).

The region spanning 95-168 (PPDTAYIHDL…EMTIRRFDEF (74 aa)) is the PRC barrel domain.

The protein belongs to the RimM family. Binds ribosomal protein uS19.

It localises to the cytoplasm. Its function is as follows. An accessory protein needed during the final step in the assembly of 30S ribosomal subunit, possibly for assembly of the head region. Essential for efficient processing of 16S rRNA. May be needed both before and after RbfA during the maturation of 16S rRNA. It has affinity for free ribosomal 30S subunits but not for 70S ribosomes. The sequence is that of Ribosome maturation factor RimM from Prosthecochloris aestuarii (strain DSM 271 / SK 413).